Here is a 299-residue protein sequence, read N- to C-terminus: Lathosterol oxidase (299 aa).

A run of 3 helical transmembrane segments spans residues 32–52 (ISLL…CATL), 79–99 (FTVK…LLEL), and 117–137 (IHLM…IYWI). The Fatty acid hydroxylase domain occupies 124 to 252 (VSFLFFTDML…YFTLWDRIGG (129 aa)). A Histidine box-1 motif is present at residues 138–143 (HRGLHH). The short motif at 151–155 (HKPHH) is the Histidine box-2 element. Residues 186–206 (VFPLHKVVYLGLYVLVNVWTI) form a helical membrane-spanning segment. The Histidine box-3 signature appears at 228-233 (HHTDHH). A Phosphoserine modification is found at S253. The tract at residues 280 to 299 (FAENGCKGKKVGNGEFTKNK) is disordered.

The protein belongs to the sterol desaturase family. The cofactor is Fe cation.

The protein resides in the endoplasmic reticulum membrane. It carries out the reaction a Delta(7)-sterol + 2 Fe(II)-[cytochrome b5] + O2 + 2 H(+) = a Delta(5),Delta(7)-sterol + 2 Fe(III)-[cytochrome b5] + 2 H2O. The enzyme catalyses lathosterol + 2 Fe(II)-[cytochrome b5] + O2 + 2 H(+) = 7-dehydrocholesterol + 2 Fe(III)-[cytochrome b5] + 2 H2O. It catalyses the reaction 5alpha-cholesta-7,24-dien-3beta-ol + 2 Fe(II)-[cytochrome b5] + O2 + 2 H(+) = 7-dehydrodesmosterol + 2 Fe(III)-[cytochrome b5] + 2 H2O. Its pathway is steroid biosynthesis; cholesterol biosynthesis. Functionally, catalyzes the penultimate step of the biosynthesis of cholesterol, the dehydrogenation of lathosterol into 7-dehydrocholesterol (7-DHC). Cholesterol is the major sterol component in mammalian membranes and a precursor for bile acid and steroid hormone synthesis. In addition to its essential role in cholesterol biosynthesis, it also indirectly regulates ferroptosis through the production of 7-DHC. By diverting the spread of damage caused by peroxyl radicals from the phospholipid components to its sterol nucleus, 7-DHC prevents this form of cell death. This is Lathosterol oxidase from Mus musculus (Mouse).